Here is a 168-residue protein sequence, read N- to C-terminus: Large ribosomal subunit protein uL10 (168 aa).

Belongs to the universal ribosomal protein uL10 family. As to quaternary structure, part of the ribosomal stalk of the 50S ribosomal subunit. The N-terminus interacts with L11 and the large rRNA to form the base of the stalk. The C-terminus forms an elongated spine to which L12 dimers bind in a sequential fashion forming a multimeric L10(L12)X complex.

Its function is as follows. Forms part of the ribosomal stalk, playing a central role in the interaction of the ribosome with GTP-bound translation factors. The sequence is that of Large ribosomal subunit protein uL10 from Laribacter hongkongensis (strain HLHK9).